Consider the following 265-residue polypeptide: MPEKINYENLKPSEARQLIREGVLTGPTAGIALGYTQANLVMLPKELAYDFLLFAFRNPKPCPILDVTDVGSPEPKGVAKGADLRTDIPKYRIYKKGVLEAEVNDIRDYWRDDFVAFLLGCSFTFEKALLENDIPVRHIEEGKNVPMYITNIETRPAGIFHGYMVVSMRPIPQNLVVRAVQVTSRFPSVHGAPVHIGDPKAIGIASLDKPDFGDPVEIKAGEVPVFWACGVTPQAVAMKSKPEIMITHSPGHMFITDLKDEMLAC.

The protein belongs to the D-glutamate cyclase family.

The chain is Putative hydro-lyase Teth514_1597 from Thermoanaerobacter sp. (strain X514).